Reading from the N-terminus, the 349-residue chain is Hydroxymethylglutaryl-CoA synthase (349 aa).

Residues D29 and A30 each coordinate (3S)-3-hydroxy-3-methylglutaryl-CoA. Catalysis depends on E81, which acts as the Proton donor/acceptor. (3S)-3-hydroxy-3-methylglutaryl-CoA-binding residues include C113, T154, T202, and H235. C113 functions as the Acyl-thioester intermediate in the catalytic mechanism. H235 functions as the Proton donor/acceptor in the catalytic mechanism. R240 lines the CoA pocket. (3S)-3-hydroxy-3-methylglutaryl-CoA is bound by residues R244, N267, and S297.

The protein belongs to the thiolase-like superfamily. Archaeal HMG-CoA synthase family. As to quaternary structure, interacts with acetoacetyl-CoA thiolase that catalyzes the precedent step in the pathway and with a DUF35 protein. The acetoacetyl-CoA thiolase/HMG-CoA synthase complex channels the intermediate via a fused CoA-binding site, which allows for efficient coupling of the endergonic thiolase reaction with the exergonic HMGCS reaction.

The enzyme catalyses acetoacetyl-CoA + acetyl-CoA + H2O = (3S)-3-hydroxy-3-methylglutaryl-CoA + CoA + H(+). Its pathway is metabolic intermediate biosynthesis; (R)-mevalonate biosynthesis; (R)-mevalonate from acetyl-CoA: step 2/3. In terms of biological role, catalyzes the condensation of acetyl-CoA with acetoacetyl-CoA to form 3-hydroxy-3-methylglutaryl-CoA (HMG-CoA). Functions in the mevalonate (MVA) pathway leading to isopentenyl diphosphate (IPP), a key precursor for the biosynthesis of isoprenoid compounds that are building blocks of archaeal membrane lipids. This is Hydroxymethylglutaryl-CoA synthase from Caldivirga maquilingensis (strain ATCC 700844 / DSM 13496 / JCM 10307 / IC-167).